Consider the following 156-residue polypeptide: Succinate dehydrogenase [ubiquinone] cytochrome b small subunit 1, mitochondrial (156 aa).

The N-terminal 25 residues, 1–25, are a transit peptide targeting the mitochondrion; that stretch reads MLSAVRRAIPLSARILRTSLIQRCA. Over 26 to 59 the chain is Mitochondrial matrix; that stretch reads GATSAAVTGAAPPQFDPIAAEKGFKPLHSHGTLF. Residues 60-78 form a helical membrane-spanning segment; that stretch reads KIERYFAAAMVPLIPAAYF. At 79–83 the chain is on the mitochondrial intermembrane side; the sequence is IHGRE. The helical transmembrane segment at 84 to 104 threads the bilayer; sequence MDLCLALALTLHVHWGVWGVV. His95 serves as a coordination point for heme b. Over 105-119 the chain is Mitochondrial matrix; sequence NDYGRPFVLGDTLAA. Tyr107 provides a ligand contact to a rhodoquinol. A helical membrane pass occupies residues 120–141; that stretch reads AVRVGAYIFTACLLAGLLYFNE. Topologically, residues 142 to 156 are mitochondrial intermembrane; it reads HDVGLTRAFEMVWEL.

The protein belongs to the CybS family. Component of the mitochondrial electron transport chain complex II composed of four subunits: a flavoprotein (Fp), an iron-sulfur protein (Ip), and a large cytochrome b (CybL) subunit and a small cytochrome b (CybS) subunit. There are 2 developmental stage-specific forms of complex II which have the Ip and CybL subunits in common. Complex II from the free-living larvae (aerobic environment) acts as a succinate dehydrogenase and is composed of the common subunit Ip and CybL and the stage specific subunits FpL and CybSL. Complex II from parasitic larvae and adults (anaerobic environment) acts as a fumarate reductase and is composed of the common subunit Ip and CybL and the stage specific subunits FpA and CybSA. Requires heme b as cofactor. In terms of tissue distribution, expressed in adult muscles (at protein level).

Its subcellular location is the mitochondrion inner membrane. In terms of biological role, membrane-bound small subunit (CybS) of the mitochondrial electron transport chain complex II, which together with the membrane-bound large subunit (CybL), anchor the catalytic subunits to the inner mitochondria membrane. During the parasitic larvae and adult stages, which occur in an anaerobic environment, complex II acts as a fumarate reductase by transferring electrons from rhodoquinol to fumarate. The polypeptide is Succinate dehydrogenase [ubiquinone] cytochrome b small subunit 1, mitochondrial (Ascaris suum (Pig roundworm)).